A 303-amino-acid polypeptide reads, in one-letter code: D-alanine--D-alanine ligase (303 aa).

The 191-residue stretch at 103–293 (KTLFIKGGIP…FAQLCEKILE (191 aa)) folds into the ATP-grasp domain. Residue 130-179 (PYVIKPSRQGSSIGIEFVYDIKELDQAIKKSTQYDHVVLAEALITGKELT) coordinates ATP. Mg(2+)-binding residues include Asp247, Glu260, and Asn262.

The protein belongs to the D-alanine--D-alanine ligase family. Requires Mg(2+) as cofactor. Mn(2+) serves as cofactor.

The protein localises to the cytoplasm. The enzyme catalyses 2 D-alanine + ATP = D-alanyl-D-alanine + ADP + phosphate + H(+). It participates in cell wall biogenesis; peptidoglycan biosynthesis. In terms of biological role, cell wall formation. The sequence is that of D-alanine--D-alanine ligase from Methylacidiphilum infernorum (isolate V4) (Methylokorus infernorum (strain V4)).